Reading from the N-terminus, the 241-residue chain is Neuroendocrine secretory protein 55 (241 aa).

The first 46 residues, 1–46 (MDRRSRPQLGRRARHNYNDLCPPIGRRAATALLWLSCSIALLRALA), serve as a signal peptide directing secretion. The disordered stretch occupies residues 71-241 (AAQVFPEPPE…KRGAIPIRRH (171 aa)). Residues 97–125 (EYQEEEFDYESETESESEIESETEFETES) show a composition bias toward acidic residues. A compositionally biased stretch (low complexity) spans 167-177 (PDASPSRAPPS). A compositionally biased stretch (basic and acidic residues) spans 182–198 (ESPRQGEEPEDKDPRDP). The segment covering 212–221 (QHRCKPKKPT) has biased composition (basic residues).

It belongs to the NESP55 family. Binds keratan sulfate chains. Post-translationally, may be proteolytically processed to give rise to a number of active peptides. In terms of tissue distribution, highly expressed in adrenal medulla and anterior and posterior pituitary. In the brain, detected in hypothalamus, hippocampus, caudate nucleus, thalamus and, in significantly lower amounts, in the cerebellum.

It is found in the cytoplasmic vesicle. It localises to the secretory vesicle. The protein localises to the secreted. The polypeptide is Neuroendocrine secretory protein 55 (Bos taurus (Bovine)).